The sequence spans 365 residues: MADLRRSPLYGRHVDLGAKMAGFGGWEMPIEYAGRGVLAEHQAVRGAVGIFDVSHLGKAEVTGAGAAEFVNACLSNDLGRIAPGQAQYTLCCNDEGGVVDDLIAYLFSGERVLLVPNAANNAEVVARLAAAAPAGVSVTDRHTGFGVLAVQGPAAPTLVAALGLPTDGAYMSFVEAAWKGRPVIVCRSGYTGERGYELLPRWDDTPALWDALFAAGEGLGASPVGLGARDTLRTEMGYPLHGQDLSPTITPVQARSGWAVGWGKERFWGREALLAERAAGPARLLWGLASTGRAIPRPHMPVTAADGAPVGEVTSGTFSPTLRQGIGLALLDRGVAEGDTVNVDVRGRPGPMTVVRPPFVPSTPR.

Belongs to the GcvT family. As to quaternary structure, the glycine cleavage system is composed of four proteins: P, T, L and H.

The catalysed reaction is N(6)-[(R)-S(8)-aminomethyldihydrolipoyl]-L-lysyl-[protein] + (6S)-5,6,7,8-tetrahydrofolate = N(6)-[(R)-dihydrolipoyl]-L-lysyl-[protein] + (6R)-5,10-methylene-5,6,7,8-tetrahydrofolate + NH4(+). The glycine cleavage system catalyzes the degradation of glycine. In Frankia alni (strain DSM 45986 / CECT 9034 / ACN14a), this protein is Aminomethyltransferase.